Consider the following 174-residue polypeptide: ATP synthase subunit delta, sodium ion specific (174 aa).

Belongs to the ATPase delta chain family. As to quaternary structure, F-type ATPases have 2 components, F(1) - the catalytic core - and F(0) - the membrane proton channel. F(1) has five subunits: alpha(3), beta(3), gamma(1), delta(1), epsilon(1). F(0) has three main subunits: a(1), b(2) and c(10-14). The alpha and beta chains form an alternating ring which encloses part of the gamma chain. F(1) is attached to F(0) by a central stalk formed by the gamma and epsilon chains, while a peripheral stalk is formed by the delta and b chains.

The protein resides in the cell inner membrane. In terms of biological role, f(1)F(0) ATP synthase produces ATP from ADP in the presence of a proton or sodium gradient. F-type ATPases consist of two structural domains, F(1) containing the extramembraneous catalytic core and F(0) containing the membrane proton channel, linked together by a central stalk and a peripheral stalk. During catalysis, ATP synthesis in the catalytic domain of F(1) is coupled via a rotary mechanism of the central stalk subunits to proton translocation. Functionally, this protein is part of the stalk that links CF(0) to CF(1). It either transmits conformational changes from CF(0) to CF(1) or is implicated in proton conduction. The polypeptide is ATP synthase subunit delta, sodium ion specific (Propionigenium modestum).